The sequence spans 347 residues: Protein RecA (347 aa).

67–74 (GPESSGKT) is an ATP binding site.

Belongs to the RecA family.

The protein resides in the cytoplasm. Can catalyze the hydrolysis of ATP in the presence of single-stranded DNA, the ATP-dependent uptake of single-stranded DNA by duplex DNA, and the ATP-dependent hybridization of homologous single-stranded DNAs. It interacts with LexA causing its activation and leading to its autocatalytic cleavage. The sequence is that of Protein RecA from Helicobacter pylori (strain P12).